Reading from the N-terminus, the 90-residue chain is Cell division topological specificity factor (90 aa).

Belongs to the MinE family.

Its function is as follows. Prevents the cell division inhibition by proteins MinC and MinD at internal division sites while permitting inhibition at polar sites. This ensures cell division at the proper site by restricting the formation of a division septum at the midpoint of the long axis of the cell. The sequence is that of Cell division topological specificity factor from Clostridium perfringens (strain SM101 / Type A).